The sequence spans 88 residues: MKFLTSLLLLFVVVMVSAVNLSMAKESANQLTERLQELDGAAIQEPAELNRHKRLTCEIDRSLCLLHCRLKGYLRAYCSQQKVCRCVQ.

A signal peptide spans 1–24 (MKFLTSLLLLFVVVMVSAVNLSMA). A propeptide spanning residues 25–54 (KESANQLTERLQELDGAAIQEPAELNRHKR) is cleaved from the precursor. 3 disulfides stabilise this stretch: C57-C78, C64-C84, and C68-C86.

It belongs to the invertebrate defensin family. Type 1 subfamily. Hemocytes and fat body.

The protein resides in the secreted. In terms of biological role, sapecins, which are potent bactericidal proteins, are produced in response to injury. Sapecin B is cytotoxic to Gram-positive bacteria. The polypeptide is Sapecin-B (Sarcophaga peregrina (Flesh fly)).